The sequence spans 235 residues: Ubiquinone/menaquinone biosynthesis C-methyltransferase UbiE (235 aa).

Residues Thr59, Asp84, and Ser123 each coordinate S-adenosyl-L-methionine.

This sequence belongs to the class I-like SAM-binding methyltransferase superfamily. MenG/UbiE family.

It catalyses the reaction a 2-demethylmenaquinol + S-adenosyl-L-methionine = a menaquinol + S-adenosyl-L-homocysteine + H(+). It carries out the reaction a 2-methoxy-6-(all-trans-polyprenyl)benzene-1,4-diol + S-adenosyl-L-methionine = a 5-methoxy-2-methyl-3-(all-trans-polyprenyl)benzene-1,4-diol + S-adenosyl-L-homocysteine + H(+). It functions in the pathway quinol/quinone metabolism; menaquinone biosynthesis; menaquinol from 1,4-dihydroxy-2-naphthoate: step 2/2. It participates in cofactor biosynthesis; ubiquinone biosynthesis. Functionally, methyltransferase required for the conversion of demethylmenaquinol (DMKH2) to menaquinol (MKH2) and the conversion of 2-polyprenyl-6-methoxy-1,4-benzoquinol (DDMQH2) to 2-polyprenyl-3-methyl-6-methoxy-1,4-benzoquinol (DMQH2). This Campylobacter jejuni subsp. jejuni serotype O:2 (strain ATCC 700819 / NCTC 11168) protein is Ubiquinone/menaquinone biosynthesis C-methyltransferase UbiE.